A 37-amino-acid polypeptide reads, in one-letter code: Large ribosomal subunit protein bL36 (37 aa).

This sequence belongs to the bacterial ribosomal protein bL36 family.

The polypeptide is Large ribosomal subunit protein bL36 (Halothermothrix orenii (strain H 168 / OCM 544 / DSM 9562)).